The primary structure comprises 497 residues: ATP synthase subunit alpha 2 (497 aa).

167 to 174 is an ATP binding site; sequence GERATGKT.

Belongs to the ATPase alpha/beta chains family. In terms of assembly, F-type ATPases have 2 components, CF(1) - the catalytic core - and CF(0) - the membrane proton channel. CF(1) has five subunits: alpha(3), beta(3), gamma(1), delta(1), epsilon(1). CF(0) has four main subunits: a(1), b(1), b'(1) and c(9-12).

Its subcellular location is the cell inner membrane. It carries out the reaction ATP + H2O + 4 H(+)(in) = ADP + phosphate + 5 H(+)(out). In terms of biological role, produces ATP from ADP in the presence of a proton gradient across the membrane. The alpha chain is a regulatory subunit. In Cereibacter sphaeroides (strain ATCC 17023 / DSM 158 / JCM 6121 / CCUG 31486 / LMG 2827 / NBRC 12203 / NCIMB 8253 / ATH 2.4.1.) (Rhodobacter sphaeroides), this protein is ATP synthase subunit alpha 2.